The following is a 359-amino-acid chain: Cell division protein ZipA (359 aa).

The Periplasmic portion of the chain corresponds to 1–4; that stretch reads MDLN. Residues 5–25 traverse the membrane as a helical segment; sequence TILIILGILALVALVAHGLWS. Residues 26-359 are Cytoplasmic-facing; that stretch reads NRREKSQYFE…AEEEYLAKIK (334 aa). Residues 78-101 are disordered; that stretch reads PPVQQPLNTEPEPITQETPVRAEP.

This sequence belongs to the ZipA family. In terms of assembly, interacts with FtsZ via their C-terminal domains.

The protein resides in the cell inner membrane. Its function is as follows. Essential cell division protein that stabilizes the FtsZ protofilaments by cross-linking them and that serves as a cytoplasmic membrane anchor for the Z ring. Also required for the recruitment to the septal ring of downstream cell division proteins. In Mannheimia succiniciproducens (strain KCTC 0769BP / MBEL55E), this protein is Cell division protein ZipA.